We begin with the raw amino-acid sequence, 167 residues long: Small ribosomal subunit protein uS9 (167 aa).

A disordered region spans residues 1–41 (MNTEAVAPDVAEEEVLTSYTSESSASADDAPKKERPALTVS). Residues 17–26 (TSYTSESSAS) show a composition bias toward polar residues.

This sequence belongs to the universal ribosomal protein uS9 family.

The polypeptide is Small ribosomal subunit protein uS9 (Renibacterium salmoninarum (strain ATCC 33209 / DSM 20767 / JCM 11484 / NBRC 15589 / NCIMB 2235)).